The primary structure comprises 192 residues: Pyruvate kinase (192 aa).

Arg-41 is a substrate binding site. Residues Asn-43, Ser-45, Asp-75, and Thr-76 each contribute to the K(+) site. 43-46 (NFSH) is an ATP binding site.

This sequence belongs to the pyruvate kinase family. The cofactor is Mg(2+). Requires K(+) as cofactor.

The enzyme catalyses pyruvate + ATP = phosphoenolpyruvate + ADP + H(+). Its pathway is carbohydrate degradation; glycolysis; pyruvate from D-glyceraldehyde 3-phosphate: step 5/5. This is Pyruvate kinase (pyk) from Spiroplasma citri.